The sequence spans 369 residues: uncharacterized protein (369 aa).

Lys184 bears the N6-(pyridoxal phosphate)lysine mark.

Belongs to the class-V pyridoxal-phosphate-dependent aminotransferase family. Pyridoxal 5'-phosphate serves as cofactor.

This is an uncharacterized protein from Helicobacter pylori (strain ATCC 700392 / 26695) (Campylobacter pylori).